Reading from the N-terminus, the 341-residue chain is GTP 3',8-cyclase (341 aa).

The Radical SAM core domain occupies 17–235 (TYGRVATDLR…LRTRFELTAE (219 aa)). Arg26 contributes to the GTP binding site. [4Fe-4S] cluster contacts are provided by Cys33 and Cys37. S-adenosyl-L-methionine is bound at residue Tyr39. [4Fe-4S] cluster is bound at residue Cys40. Residue Arg77 participates in GTP binding. S-adenosyl-L-methionine is bound at residue Gly81. Thr108 lines the GTP pocket. Residue Ser132 participates in S-adenosyl-L-methionine binding. Residue Lys169 participates in GTP binding. Met203 serves as a coordination point for S-adenosyl-L-methionine. [4Fe-4S] cluster-binding residues include Cys268 and Cys271. 273-275 (RTR) is a binding site for GTP. Cys285 provides a ligand contact to [4Fe-4S] cluster.

The protein belongs to the radical SAM superfamily. MoaA family. As to quaternary structure, monomer and homodimer. The cofactor is [4Fe-4S] cluster.

The catalysed reaction is GTP + AH2 + S-adenosyl-L-methionine = (8S)-3',8-cyclo-7,8-dihydroguanosine 5'-triphosphate + 5'-deoxyadenosine + L-methionine + A + H(+). It functions in the pathway cofactor biosynthesis; molybdopterin biosynthesis. In terms of biological role, catalyzes the cyclization of GTP to (8S)-3',8-cyclo-7,8-dihydroguanosine 5'-triphosphate. The protein is GTP 3',8-cyclase of Streptomyces coelicolor (strain ATCC BAA-471 / A3(2) / M145).